The sequence spans 802 residues: Xylanase/beta-glucanase (802 aa).

The first 31 residues, 1–31, serve as a signal peptide directing secretion; sequence MKKSIFKRYAAAVGLMASVLMFTAVPTTSNA. The GH11 domain maps to 32-239; the sequence is ADDQKTGKVG…SNGSANVKSI (208 aa). The active-site Nucleophile is the glutamate 124. The active-site Proton donor is the glutamate 226. Residues 245 to 523 form a b region; sequence IDIPDPEPIK…SYLEGHDPSK (279 aa). The 147-residue stretch at 258 to 404 folds into the CBM-cenC domain; sequence NGYYLKENFE…YMDGAYAGVK (147 aa). 2 disordered regions span residues 414–436 and 533–564; these read SQSVDPPVTEPTNPTNPTGPSVT and TTTTTTTTTTTSKTTTTTTTTSPAMHGGYRDL. 2 stretches are compositionally biased toward low complexity: residues 419–436 and 533–553; these read PPVTEPTNPTNPTGPSVT and TTTTTTTTTTTSKTTTTTTTT. The Dockerin domain maps to 434-513; that stretch reads SVTKWGDANC…LIRAISELPE (80 aa). A linker region spans residues 524-555; it reads TTTTTTRITTTTTTTTTTTTSKTTTTTTTTSP. The GH16 domain occupies 556–792; that stretch reads AMHGGYRDLG…WVTYNKNGVQ (237 aa). The active-site Nucleophile is glutamate 684.

It in the N-terminal section; belongs to the glycosyl hydrolase 11 (cellulase G) family. This sequence in the C-terminal section; belongs to the glycosyl hydrolase 16 family.

The enzyme catalyses Endohydrolysis of (1-&gt;4)-beta-D-xylosidic linkages in xylans.. It carries out the reaction Hydrolysis of (1-&gt;4)-beta-D-glucosidic linkages in beta-D-glucans containing (1-&gt;3)- and (1-&gt;4)-bonds.. The protein operates within glycan degradation; xylan degradation. In terms of biological role, contains two catalytic domains with xylanase and endo-beta-1,3-1,4 glucanase activities. This chain is Xylanase/beta-glucanase (xynD), found in Ruminococcus flavefaciens.